Reading from the N-terminus, the 452-residue chain is MNDTIAAIATPPGEGGIGIIRLSGPDAQSIALRIFRPVRPGRLRSHRVRYGHVIGPDGEVIDEALLTLMAAPHSFTREDVVEISCHGGALPVQLTLEAALAAGARLANPGEFTLRAFLNGRIDLSQAEATLDVIRAQTSAGLAIAQAQLGGWLAREVRAARTAILEPLAYITALIDFPEEGIEPQTVAGPIEQALATVERLLAGADQGMVLRNGARVVLVGRPNVGKSSLLNALLRVERAIVTPIPGTTRDTLEEMANLAGVPVVLIDTAGMRTSTDPVEQIGVERAAAALAGADLALLVFDSSQPFTPEDEAMLVATADRPTIIVWNKCDDPDVPPPPAPPHPKAMAVVACSARYGHGIDTLAKTIATTLLGGTLPAVGATHLVSNPRHRAALRRAAEFLRAAQETLAAGAATDLLAADLTGAANALGEITGETVGEDLLDMIFSRFCIGK.

Residues Arg-21, Glu-82, and Arg-121 each coordinate (6S)-5-formyl-5,6,7,8-tetrahydrofolate. The region spanning 214 to 372 is the TrmE-type G domain; the sequence is GARVVLVGRP…LAKTIATTLL (159 aa). Asn-224 is a K(+) binding site. GTP-binding positions include 224 to 229, 243 to 249, 268 to 271, and 353 to 355; these read NVGKSS, TPIPGTT, DTAG, and SAR. Ser-228 lines the Mg(2+) pocket. K(+) contacts are provided by Thr-243, Ile-245, and Thr-248. A Mg(2+)-binding site is contributed by Thr-249. Lys-452 serves as a coordination point for (6S)-5-formyl-5,6,7,8-tetrahydrofolate.

Belongs to the TRAFAC class TrmE-Era-EngA-EngB-Septin-like GTPase superfamily. TrmE GTPase family. Homodimer. Heterotetramer of two MnmE and two MnmG subunits. K(+) is required as a cofactor.

Its subcellular location is the cytoplasm. Exhibits a very high intrinsic GTPase hydrolysis rate. Involved in the addition of a carboxymethylaminomethyl (cmnm) group at the wobble position (U34) of certain tRNAs, forming tRNA-cmnm(5)s(2)U34. This Chloroflexus aurantiacus (strain ATCC 29366 / DSM 635 / J-10-fl) protein is tRNA modification GTPase MnmE.